Reading from the N-terminus, the 258-residue chain is Imidazole glycerol phosphate synthase subunit HisF (258 aa).

Catalysis depends on residues D11 and D130.

The protein belongs to the HisA/HisF family. As to quaternary structure, heterodimer of HisH and HisF.

The protein resides in the cytoplasm. The catalysed reaction is 5-[(5-phospho-1-deoxy-D-ribulos-1-ylimino)methylamino]-1-(5-phospho-beta-D-ribosyl)imidazole-4-carboxamide + L-glutamine = D-erythro-1-(imidazol-4-yl)glycerol 3-phosphate + 5-amino-1-(5-phospho-beta-D-ribosyl)imidazole-4-carboxamide + L-glutamate + H(+). It functions in the pathway amino-acid biosynthesis; L-histidine biosynthesis; L-histidine from 5-phospho-alpha-D-ribose 1-diphosphate: step 5/9. In terms of biological role, IGPS catalyzes the conversion of PRFAR and glutamine to IGP, AICAR and glutamate. The HisF subunit catalyzes the cyclization activity that produces IGP and AICAR from PRFAR using the ammonia provided by the HisH subunit. The protein is Imidazole glycerol phosphate synthase subunit HisF of Enterobacter sp. (strain 638).